Here is a 293-residue protein sequence, read N- to C-terminus: NAD-dependent protein deacetylase (293 aa).

Positions 1–284 (MTVAITQTGP…QPPDPLHTAT (284 aa)) constitute a Deacetylase sirtuin-type domain. Residues 27-47 (GAGC…GGWK) and 105-108 (QNVD) each bind NAD(+). The active-site Proton acceptor is His-123. Residues Cys-131, Cys-134, Cys-182, and Cys-185 each coordinate Zn(2+). NAD(+) contacts are provided by residues 222–224 (GSS), 248–250 (NFG), and Cys-266.

This sequence belongs to the sirtuin family. Class II subfamily. The cofactor is Zn(2+).

Its subcellular location is the cytoplasm. The catalysed reaction is N(6)-acetyl-L-lysyl-[protein] + NAD(+) + H2O = 2''-O-acetyl-ADP-D-ribose + nicotinamide + L-lysyl-[protein]. In terms of biological role, NAD-dependent protein deacetylase which modulates the activities of several enzymes which are inactive in their acetylated form. In Xanthomonas campestris pv. campestris (strain B100), this protein is NAD-dependent protein deacetylase.